Consider the following 1013-residue polypeptide: EF-hand calcium-binding domain-containing protein 6 (1013 aa).

EF-hand domains are found at residues 20–55 (KNIK…FCLK), 145–180 (KSYE…FIYQ), 251–286 (DRSA…VAIK), 287–322 (LSDS…NCRM), and 352–387 (RNLQ…FCPF). The disordered stretch occupies residues 441–460 (QKDEQQQPDLSERTKPTEDK). 6 EF-hand domains span residues 482 to 517 (QQDP…TGMP), 589 to 624 (ESFR…LLLN), 695 to 730 (NRWS…FDIP), 731 to 766 (LTPR…NYSP), 812 to 847 (DLHQ…CGCS), and 917 to 952 (SSQL…FCYK). Ca(2+)-binding residues include Asp602, Asp604, Asp606, and Asp613. Thr732 is modified (phosphothreonine).

In terms of assembly, microtubule inner protein component of sperm flagellar doublet microtubules. Binds PARK7. Part of a ternary complex containing PARK7, EFCAB6/DJBP and AR.

Its subcellular location is the nucleus. The protein localises to the cytoplasm. The protein resides in the cytoskeleton. It is found in the flagellum axoneme. Negatively regulates the androgen receptor by recruiting histone deacetylase complex, and protein DJ-1 antagonizes this inhibition by abrogation of this complex. Microtubule inner protein (MIP) part of the dynein-decorated doublet microtubules (DMTs) in cilia axoneme, which is required for motile cilia beating. The sequence is that of EF-hand calcium-binding domain-containing protein 6 (EFCAB6) from Pongo abelii (Sumatran orangutan).